A 399-amino-acid polypeptide reads, in one-letter code: Odorant receptor 42b (399 aa).

The Cytoplasmic segment spans residues 1–45 (MVFELIRPAPLTEQKRSRDGCIYLYRAMKFIGWLPPKQGVLRYVY). A helical transmembrane segment spans residues 46–66 (LTWTLMTFVWCTTYLPLGFLG). At 67–83 (SYMTQIKSFSPGEFLTS) the chain is on the extracellular side. Residues 84 to 104 (LQVCINAYGSSVKVAITYSML) form a helical membrane-spanning segment. The Cytoplasmic segment spans residues 105-140 (WRLIKAKNILDQLDLRCTAMEEREKIHLVVARSNHA). Residues 141-161 (FLIFTFVYCGYAGSTYLSSVL) form a helical membrane-spanning segment. The Extracellular portion of the chain corresponds to 162-178 (SGRPPWQLYNPFIDWHD). Residues 179–199 (GTLKLWVASTLEYMVMSGAVL) form a helical membrane-spanning segment. Residues 200–268 (QDQLSDSYPL…AIIKPVIQGT (69 aa)) lie on the Cytoplasmic side of the membrane. A helical transmembrane segment spans residues 269-289 (IFTQFLLIGLVLGFTLINVFF). Over 290–292 (FSD) the chain is Extracellular. Residues 293-313 (IWTGIASFMFVITILLQTFPF) form a helical membrane-spanning segment. At 314 to 356 (CYTCNLIMEDCESLTHAIFQSNWVDASRRYKTTLLYFLQNVQQ) the chain is on the cytoplasmic side. Residues 357–377 (PIVFIAGGIFQISMSSNISVA) form a helical membrane-spanning segment. Residues 378 to 399 (KFAFSVITITKQMNIADKFKTD) lie on the Extracellular side of the membrane.

This sequence belongs to the insect chemoreceptor superfamily. Heteromeric odorant receptor channel (TC 1.A.69) family. Or2a subfamily. As to quaternary structure, interacts with Orco. Complexes exist early in the endomembrane system in olfactory sensory neurons (OSNs), coupling these complexes to the conserved ciliary trafficking pathway. In terms of tissue distribution, expressed in olfactory sensory neurons in the antenna.

Its subcellular location is the cell membrane. Functionally, odorant receptor which mediates acceptance or avoidance behavior, depending on its substrates. The odorant receptor repertoire encodes a large collection of odor stimuli that vary widely in identity, intensity, and duration. May form a complex with Orco to form odorant-sensing units, providing sensitive and prolonged odorant signaling and calcium permeability. Involved in the behavioral responses to ethyl acetate and pentyl acetate. The chain is Odorant receptor 42b (Or42b) from Drosophila melanogaster (Fruit fly).